The primary structure comprises 140 residues: Protein NrdI (140 aa).

The protein belongs to the NrdI family.

Its function is as follows. Probably involved in ribonucleotide reductase function. This chain is Protein NrdI, found in Photorhabdus laumondii subsp. laumondii (strain DSM 15139 / CIP 105565 / TT01) (Photorhabdus luminescens subsp. laumondii).